A 315-amino-acid polypeptide reads, in one-letter code: Ornithine carbamoyltransferase (315 aa).

Residues 53 to 56, Q80, R104, and 131 to 134 each bind carbamoyl phosphate; these read STRT and HPCQ. L-ornithine-binding positions include N163, D227, and 231–232; that span reads SM. Carbamoyl phosphate contacts are provided by residues 267-268 and R295; that span reads CL.

It belongs to the aspartate/ornithine carbamoyltransferase superfamily. OTCase family.

The protein resides in the cytoplasm. It catalyses the reaction carbamoyl phosphate + L-ornithine = L-citrulline + phosphate + H(+). It participates in amino-acid biosynthesis; L-arginine biosynthesis; L-arginine from L-ornithine and carbamoyl phosphate: step 1/3. In terms of biological role, reversibly catalyzes the transfer of the carbamoyl group from carbamoyl phosphate (CP) to the N(epsilon) atom of ornithine (ORN) to produce L-citrulline. The protein is Ornithine carbamoyltransferase of Rhodococcus jostii (strain RHA1).